A 389-amino-acid polypeptide reads, in one-letter code: Succinate--CoA ligase [ADP-forming] subunit beta (389 aa).

Positions 9–244 (KAVLAKYGVP…LTEEDPAEVE (236 aa)) constitute an ATP-grasp domain. ATP is bound by residues Lys46, 53–55 (GRG), Glu99, Ser102, and Glu107. Residues Asn199 and Asp213 each contribute to the Mg(2+) site. Residues Asn264 and 321 to 323 (GIM) each bind substrate.

It belongs to the succinate/malate CoA ligase beta subunit family. Heterotetramer of two alpha and two beta subunits. It depends on Mg(2+) as a cofactor.

It catalyses the reaction succinate + ATP + CoA = succinyl-CoA + ADP + phosphate. The catalysed reaction is GTP + succinate + CoA = succinyl-CoA + GDP + phosphate. The protein operates within carbohydrate metabolism; tricarboxylic acid cycle; succinate from succinyl-CoA (ligase route): step 1/1. In terms of biological role, succinyl-CoA synthetase functions in the citric acid cycle (TCA), coupling the hydrolysis of succinyl-CoA to the synthesis of either ATP or GTP and thus represents the only step of substrate-level phosphorylation in the TCA. The beta subunit provides nucleotide specificity of the enzyme and binds the substrate succinate, while the binding sites for coenzyme A and phosphate are found in the alpha subunit. The protein is Succinate--CoA ligase [ADP-forming] subunit beta of Parvibaculum lavamentivorans (strain DS-1 / DSM 13023 / NCIMB 13966).